Here is a 144-residue protein sequence, read N- to C-terminus: Alpha-crystallin (144 aa).

Residues 33–143 (PTFDTRLMRL…TEKHIQIRST (111 aa)) form the sHSP domain.

It belongs to the small heat shock protein (HSP20) family.

It is found in the secreted. The protein resides in the cell wall. The protein localises to the cytoplasm. Functionally, acts as a chaperone. In Mycobacterium bovis (strain ATCC BAA-935 / AF2122/97), this protein is Alpha-crystallin (hspX).